Here is a 352-residue protein sequence, read N- to C-terminus: DNA polymerase IV (352 aa).

The UmuC domain occupies 3 to 187 (VLFVDFDYFY…LDIADVPGIG (185 aa)). Mg(2+) contacts are provided by D7 and D105. E106 is a catalytic residue.

The protein belongs to the DNA polymerase type-Y family. Monomer. Interacts with the PCNA heterotrimer via PCNA1. It depends on Mg(2+) as a cofactor.

The protein localises to the cytoplasm. The catalysed reaction is DNA(n) + a 2'-deoxyribonucleoside 5'-triphosphate = DNA(n+1) + diphosphate. Poorly processive, error-prone DNA polymerase involved in untargeted mutagenesis. Copies undamaged DNA at stalled replication forks, which arise in vivo from mismatched or misaligned primer ends. These misaligned primers can be extended by PolIV. Exhibits no 3'-5' exonuclease (proofreading) activity. It is involved in translesional synthesis. The protein is DNA polymerase IV (dbh) of Saccharolobus solfataricus (strain ATCC 35092 / DSM 1617 / JCM 11322 / P2) (Sulfolobus solfataricus).